The following is a 164-amino-acid chain: SsrA-binding protein (164 aa).

It belongs to the SmpB family.

Its subcellular location is the cytoplasm. In terms of biological role, required for rescue of stalled ribosomes mediated by trans-translation. Binds to transfer-messenger RNA (tmRNA), required for stable association of tmRNA with ribosomes. tmRNA and SmpB together mimic tRNA shape, replacing the anticodon stem-loop with SmpB. tmRNA is encoded by the ssrA gene; the 2 termini fold to resemble tRNA(Ala) and it encodes a 'tag peptide', a short internal open reading frame. During trans-translation Ala-aminoacylated tmRNA acts like a tRNA, entering the A-site of stalled ribosomes, displacing the stalled mRNA. The ribosome then switches to translate the ORF on the tmRNA; the nascent peptide is terminated with the 'tag peptide' encoded by the tmRNA and targeted for degradation. The ribosome is freed to recommence translation, which seems to be the essential function of trans-translation. The protein is SsrA-binding protein of Synechococcus sp. (strain CC9311).